The primary structure comprises 378 residues: Mitogen-activated protein kinase mpkC (378 aa).

The 281-residue stretch at 20-300 (YVNPQPIGMG…AQDALRHPYL (281 aa)) folds into the Protein kinase domain. ATP-binding positions include 26 to 34 (IGMGSFGLV) and Lys-49. Asp-141 acts as the Proton acceptor in catalysis.

The protein belongs to the protein kinase superfamily. Ser/Thr protein kinase family. MAP kinase subfamily. It depends on Mg(2+) as a cofactor.

It is found in the nucleus. It catalyses the reaction L-seryl-[protein] + ATP = O-phospho-L-seryl-[protein] + ADP + H(+). It carries out the reaction L-threonyl-[protein] + ATP = O-phospho-L-threonyl-[protein] + ADP + H(+). With respect to regulation, activated by threonine and tyrosine phosphorylation. Its function is as follows. Mitogen-activated protein kinase (MAPK), part of the high-osmolarity glycerol (HOG) pathway. With sakA, plays a role in the osmotic and oxidative stress responses. Involved in paradoxical growth, the cell wall integrity (CWI) pathway and biofilm formation. SakA and mpkC collaborate during virulence and mpkC could act by modulating sakA activity upon exposure to several types of stresses and during cell wall biosynthesis. This is Mitogen-activated protein kinase mpkC from Aspergillus fumigatus (strain CBS 144.89 / FGSC A1163 / CEA10) (Neosartorya fumigata).